A 396-amino-acid polypeptide reads, in one-letter code: 8-amino-7-oxononanoate synthase (396 aa).

Arginine 19 provides a ligand contact to substrate. 106–107 (GY) lines the pyridoxal 5'-phosphate pocket. Histidine 131 contacts substrate. The pyridoxal 5'-phosphate site is built by serine 176, histidine 204, and threonine 233. At lysine 236 the chain carries N6-(pyridoxal phosphate)lysine. Position 350 (threonine 350) interacts with substrate.

It belongs to the class-II pyridoxal-phosphate-dependent aminotransferase family. BioF subfamily. Homodimer. The cofactor is pyridoxal 5'-phosphate.

The enzyme catalyses 6-carboxyhexanoyl-[ACP] + L-alanine + H(+) = (8S)-8-amino-7-oxononanoate + holo-[ACP] + CO2. Its pathway is cofactor biosynthesis; biotin biosynthesis. Catalyzes the decarboxylative condensation of pimeloyl-[acyl-carrier protein] and L-alanine to produce 8-amino-7-oxononanoate (AON), [acyl-carrier protein], and carbon dioxide. In Pseudomonas syringae pv. syringae (strain B728a), this protein is 8-amino-7-oxononanoate synthase.